A 311-amino-acid polypeptide reads, in one-letter code: Salutaridine reductase (311 aa).

Position 17–40 (17–40 (VTGGNKGIGFEICKQLSSSGIMVV)) interacts with NADP(+). Serine 180 contacts substrate. Tyrosine 236 serves as the catalytic Proton acceptor.

The protein belongs to the short-chain dehydrogenases/reductases (SDR) family.

The enzyme catalyses (7S)-salutaridinol + NADP(+) = salutaridine + NADPH + H(+). With respect to regulation, subject to substrate inhibition at salutaridine concentrations higher than 20 to 30 uM. Its function is as follows. Involved in biosynthesis of morphinan-type benzylisoquinoline alkaloids. Catalyzes the stereospecific conversion of salutaridine to salutaridinol. The polypeptide is Salutaridine reductase (Papaver bracteatum (Great scarlet poppy)).